A 309-amino-acid polypeptide reads, in one-letter code: 2-phospho-L-lactate transferase (309 aa).

Residues D50 and K89 each coordinate 7,8-didemethyl-8-hydroxy-5-deazariboflavin.

This sequence belongs to the CofD family. As to quaternary structure, homodimer. It depends on Mg(2+) as a cofactor.

It catalyses the reaction (2S)-lactyl-2-diphospho-5'-guanosine + 7,8-didemethyl-8-hydroxy-5-deazariboflavin = oxidized coenzyme F420-0 + GMP + H(+). It functions in the pathway cofactor biosynthesis; coenzyme F420 biosynthesis. Functionally, catalyzes the transfer of the 2-phospholactate moiety from (2S)-lactyl-2-diphospho-5'-guanosine to 7,8-didemethyl-8-hydroxy-5-deazariboflavin (FO) with the formation of oxidized coenzyme F420-0 and GMP. The polypeptide is 2-phospho-L-lactate transferase (Methanococcus maripaludis (strain C6 / ATCC BAA-1332)).